Consider the following 398-residue polypeptide: Steroid C26-monooxygenase (398 aa).

C340 contacts heme.

Belongs to the cytochrome P450 family. Heme is required as a cofactor.

The catalysed reaction is cholest-4-en-3-one + 6 reduced [2Fe-2S]-[ferredoxin] + 3 O2 + 5 H(+) = (25R)-3-oxocholest-4-en-26-oate + 6 oxidized [2Fe-2S]-[ferredoxin] + 4 H2O. It catalyses the reaction cholest-4-en-3-one + 2 reduced [2Fe-2S]-[ferredoxin] + O2 + 2 H(+) = (25R)-3-oxocholest-4-en-26-ol + 2 oxidized [2Fe-2S]-[ferredoxin] + H2O. The enzyme catalyses (25R)-3-oxocholest-4-en-26-ol + 2 reduced [2Fe-2S]-[ferredoxin] + O2 + 2 H(+) = (25R)-3-oxocholest-4-en-26-al + 2 oxidized [2Fe-2S]-[ferredoxin] + 2 H2O. It carries out the reaction (25R)-3-oxocholest-4-en-26-al + 2 reduced [2Fe-2S]-[ferredoxin] + O2 + H(+) = (25R)-3-oxocholest-4-en-26-oate + 2 oxidized [2Fe-2S]-[ferredoxin] + H2O. The catalysed reaction is cholesterol + NADPH + O2 + H(+) = 26-hydroxycholesterol + NADP(+) + H2O. It catalyses the reaction 26-hydroxycholesterol + 2 reduced [2Fe-2S]-[ferredoxin] + O2 + 2 H(+) = (3beta)-hydroxy-cholest-5-en-26-al + 2 oxidized [2Fe-2S]-[ferredoxin] + 2 H2O. The enzyme catalyses (3beta)-hydroxy-cholest-5-en-26-al + NADPH + O2 = (3beta)-hydroxy-cholest-5-en-26-oate + NADP(+) + H2O. It carries out the reaction (25S)-3-oxocholest-4-en-26-ol + 2 reduced [2Fe-2S]-[ferredoxin] + O2 + 2 H(+) = (25S)-3-oxocholest-4-en-26-al + 2 oxidized [2Fe-2S]-[ferredoxin] + 2 H2O. The catalysed reaction is (25S)-3-oxocholest-4-en-26-al + 2 reduced [2Fe-2S]-[ferredoxin] + O2 + H(+) = (25S)-3-oxocholest-4-en-26-oate + 2 oxidized [2Fe-2S]-[ferredoxin] + H2O. It functions in the pathway steroid metabolism; cholesterol degradation. With respect to regulation, inhibited by econazole, clotrimazole and miconazole. Involved in the utilization of cholesterol as the sole carbon and energy source by degrading the side chain during infection. Primarily catalyzes the sequential oxidation of the terminal methyl of cholest-4-en-3-one into (25R)-26-hydroxycholest-4-en-3-one (alcohol), (25R)-26-oxocholest-4-en-3-one (aldehyde), to finally yield the carboxylic acid (25R)-3-oxocholest-4-en-26-oate. In vitro, Cyp142 catalyzes with equal preference the oxidation of both (25R)- and (25S)-26-hydroxycholest-4-en-3-one diastereomers to the corresponding carboxylic acid which is a prerequisite for entry into the beta-oxidation pathway. Also able to sequentially oxidize cholesterol itself, not only cholest-4-en-3-one. This is Steroid C26-monooxygenase (cyp142) from Mycobacterium tuberculosis (strain ATCC 25618 / H37Rv).